Reading from the N-terminus, the 189-residue chain is Glycerol-3-phosphate acyltransferase (189 aa).

Transmembrane regions (helical) follow at residues 1-21 (MFWL…AIVL), 50-70 (KLAI…VLLA), 77-97 (LHAQ…PLYF), 111-131 (MLMG…LLTF), and 151-171 (LLAW…AMIV).

This sequence belongs to the PlsY family. As to quaternary structure, probably interacts with PlsX.

It localises to the cell inner membrane. The catalysed reaction is an acyl phosphate + sn-glycerol 3-phosphate = a 1-acyl-sn-glycero-3-phosphate + phosphate. The protein operates within lipid metabolism; phospholipid metabolism. Functionally, catalyzes the transfer of an acyl group from acyl-phosphate (acyl-PO(4)) to glycerol-3-phosphate (G3P) to form lysophosphatidic acid (LPA). This enzyme utilizes acyl-phosphate as fatty acyl donor, but not acyl-CoA or acyl-ACP. The chain is Glycerol-3-phosphate acyltransferase from Pseudomonas putida (strain GB-1).